A 277-amino-acid polypeptide reads, in one-letter code: MATANSSVKIGNVTFSNSAPFALIAGPCQMETREHAFDMAGRLKEMTDKLGIDLVYKSSFDKANRTSLKAERGIGLEKAMEVFADLKKEFGFPVLTDIHTEEQCAAVAPVVDVLQIPAFLCRQTDLLIAAAKTGRVVNVKKGQFLAPWDMKNVLSKITESGNPNVLATERGVSFGYNTLVSDMRSLPIMAGLGSPVVFDATHSVQQPGGHGGSSGGQREFVETLARAAVAVGVAGLFIETHQDPDNAPSDGPNMVPVDKMPALLEKLMAFDRIAKGL.

This sequence belongs to the KdsA family.

It localises to the cytoplasm. It carries out the reaction D-arabinose 5-phosphate + phosphoenolpyruvate + H2O = 3-deoxy-alpha-D-manno-2-octulosonate-8-phosphate + phosphate. The protein operates within carbohydrate biosynthesis; 3-deoxy-D-manno-octulosonate biosynthesis; 3-deoxy-D-manno-octulosonate from D-ribulose 5-phosphate: step 2/3. Its pathway is bacterial outer membrane biogenesis; lipopolysaccharide biosynthesis. This chain is 2-dehydro-3-deoxyphosphooctonate aldolase, found in Brucella anthropi (strain ATCC 49188 / DSM 6882 / CCUG 24695 / JCM 21032 / LMG 3331 / NBRC 15819 / NCTC 12168 / Alc 37) (Ochrobactrum anthropi).